The sequence spans 550 residues: Methionine--tRNA ligase (550 aa).

The 'HIGH' region motif lies at 13–23 (PYANGEIHLGH). C144, C147, C157, and C160 together coordinate Zn(2+). Residues 329–333 (KMSKS) carry the 'KMSKS' region motif. Position 332 (K332) interacts with ATP.

This sequence belongs to the class-I aminoacyl-tRNA synthetase family. MetG type 1 subfamily. As to quaternary structure, monomer. The cofactor is Zn(2+).

Its subcellular location is the cytoplasm. The catalysed reaction is tRNA(Met) + L-methionine + ATP = L-methionyl-tRNA(Met) + AMP + diphosphate. Is required not only for elongation of protein synthesis but also for the initiation of all mRNA translation through initiator tRNA(fMet) aminoacylation. In Ruthia magnifica subsp. Calyptogena magnifica, this protein is Methionine--tRNA ligase.